The chain runs to 190 residues: MPPRPRFDRRAPVRELPNINERIKYPQLRVVDSDGKQLGVIDRLKALEIASQRELDLVLVSEKANPPVCRIMDYGKYKFEQEKKAKEARKKSHQTEVKEVKMRYKIDKHDYDVRIGQATKFLKSGDKVKCTVIFRGREIQHSNLAETLLLKMANDLEEQSEVQQKPKREGRNMIMFLSPRKTPLIKKDDG.

The protein belongs to the IF-3 family. Monomer.

The protein localises to the cytoplasm. Its function is as follows. IF-3 binds to the 30S ribosomal subunit and shifts the equilibrium between 70S ribosomes and their 50S and 30S subunits in favor of the free subunits, thus enhancing the availability of 30S subunits on which protein synthesis initiation begins. The protein is Translation initiation factor IF-3 of Prochlorococcus marinus (strain AS9601).